A 369-amino-acid chain; its full sequence is Anhydro-N-acetylmuramic acid kinase (369 aa).

ATP is bound at residue 12–19; it reads GTSMDGVD.

The protein belongs to the anhydro-N-acetylmuramic acid kinase family.

The catalysed reaction is 1,6-anhydro-N-acetyl-beta-muramate + ATP + H2O = N-acetyl-D-muramate 6-phosphate + ADP + H(+). Its pathway is amino-sugar metabolism; 1,6-anhydro-N-acetylmuramate degradation. It participates in cell wall biogenesis; peptidoglycan recycling. In terms of biological role, catalyzes the specific phosphorylation of 1,6-anhydro-N-acetylmuramic acid (anhMurNAc) with the simultaneous cleavage of the 1,6-anhydro ring, generating MurNAc-6-P. Is required for the utilization of anhMurNAc either imported from the medium or derived from its own cell wall murein, and thus plays a role in cell wall recycling. In Shewanella putrefaciens (strain CN-32 / ATCC BAA-453), this protein is Anhydro-N-acetylmuramic acid kinase.